Consider the following 242-residue polypeptide: Lactate utilization protein A 2 (242 aa).

This sequence belongs to the LutA/YkgE family.

Is involved in L-lactate degradation and allows cells to grow with lactate as the sole carbon source. The chain is Lactate utilization protein A 2 from Bacillus cereus (strain 03BB102).